A 60-amino-acid polypeptide reads, in one-letter code: Potassium channel toxin alpha-KTx 29.3 (60 aa).

Residues 1–28 (MKSVCGVLIILVVLTTMLSISTFSTVGA) form the signal peptide. 3 cysteine pairs are disulfide-bonded: Cys-32/Cys-51, Cys-40/Cys-56, and Cys-44/Cys-58.

Belongs to the short scorpion toxin superfamily. Potassium channel inhibitor family. Alpha-KTx 29 subfamily. As to expression, expressed by the venom gland.

Its subcellular location is the secreted. In terms of biological role, weakly inhibits the Kv1.3/KCNA3 channel (1 uM of thetoxin inhibits currents by 13.2%) and Kv7.1/KCNQ1 channel (10 uM of the toxin inhibits currents by 27.7%). The protein is Potassium channel toxin alpha-KTx 29.3 of Lychas mucronatus (Chinese swimming scorpion).